Reading from the N-terminus, the 267-residue chain is Ribosomal RNA small subunit methyltransferase A (267 aa).

S-adenosyl-L-methionine-binding residues include asparagine 16, leucine 18, glycine 43, glutamate 64, aspartate 89, and asparagine 110.

This sequence belongs to the class I-like SAM-binding methyltransferase superfamily. rRNA adenine N(6)-methyltransferase family. RsmA subfamily.

Its subcellular location is the cytoplasm. The catalysed reaction is adenosine(1518)/adenosine(1519) in 16S rRNA + 4 S-adenosyl-L-methionine = N(6)-dimethyladenosine(1518)/N(6)-dimethyladenosine(1519) in 16S rRNA + 4 S-adenosyl-L-homocysteine + 4 H(+). Specifically dimethylates two adjacent adenosines (A1518 and A1519) in the loop of a conserved hairpin near the 3'-end of 16S rRNA in the 30S particle. May play a critical role in biogenesis of 30S subunits. The protein is Ribosomal RNA small subunit methyltransferase A of Pseudomonas putida (strain ATCC 47054 / DSM 6125 / CFBP 8728 / NCIMB 11950 / KT2440).